The chain runs to 259 residues: Bidirectional sugar transporter SWEET4 (259 aa).

Over 1–10 (MVSPDTIRTA) the chain is Extracellular. The MtN3/slv 1 domain occupies 10-94 (AIGVVGNGTA…TYIALFLAFS (85 aa)). Residues 11–31 (IGVVGNGTALVLFLSPVPTFI) form a helical membrane-spanning segment. Over 32-44 (RIWKKGSVEQYSA) the chain is Cytoplasmic. The chain crosses the membrane as a helical span at residues 45-65 (VPYVATLLNCMMWVLYGLPAV). Over 66–77 (HPHSMLVITING) the chain is Extracellular. An N-linked (GlcNAc...) asparagine glycan is attached at Asn76. Residues 78-98 (TGMAIELTYIALFLAFSLGAV) form a helical membrane-spanning segment. Residues 99–101 (RRR) lie on the Cytoplasmic side of the membrane. Residues 102–122 (VLLLLAAEVAFVAAVAALVLN) traverse the membrane as a helical segment. The Extracellular portion of the chain corresponds to 123-131 (LAHTHERRS). The helical transmembrane segment at 132–152 (MIVGILCVLFGTGMYAAPLSV) threads the bilayer. Residues 133–217 (IVGILCVLFG…ILYAIYYKST (85 aa)) enclose the MtN3/slv 2 domain. Over 153–165 (MKMVIQTKSVEYM) the chain is Cytoplasmic. Residues 166–186 (PLFLSLASLVNGICWTAYALI) traverse the membrane as a helical segment. Residues 187-191 (RFDLY) are Extracellular-facing. A helical transmembrane segment spans residues 192 to 212 (ITIPNGLGVMFAVAQLILYAI). Residues 213-259 (YYKSTQQIIEARKRKEADHVAMTDVVVDSAKNNPSSGAAAAAANGRY) lie on the Cytoplasmic side of the membrane.

It belongs to the SWEET sugar transporter family. In terms of assembly, forms homooligomers and/or heterooligomers.

The protein localises to the cell membrane. Its function is as follows. Mediates both low-affinity uptake and efflux of sugar across the plasma membrane. This is Bidirectional sugar transporter SWEET4 (SWEET4) from Oryza sativa subsp. indica (Rice).